The following is a 94-amino-acid chain: Putative defensin-like protein 88 (94 aa).

An N-terminal signal peptide occupies residues 1–26 (MATQKFSYFLLVLLMVFALILPSIIS). Cystine bridges form between cysteine 32–cysteine 72, cysteine 38–cysteine 59, and cysteine 48–cysteine 71.

Belongs to the DEFL family.

The protein localises to the secreted. This Arabidopsis thaliana (Mouse-ear cress) protein is Putative defensin-like protein 88.